Here is a 267-residue protein sequence, read N- to C-terminus: Phosphate import ATP-binding protein PstB 2 (267 aa).

An ABC transporter domain is found at 21-262 (LSTKDVHVYY…AKLQSTNDYV (242 aa)). Position 53-60 (53-60 (GPSGSGKS)) interacts with ATP.

This sequence belongs to the ABC transporter superfamily. Phosphate importer (TC 3.A.1.7) family. In terms of assembly, the complex is composed of two ATP-binding proteins (PstB), two transmembrane proteins (PstC and PstA) and a solute-binding protein (PstS).

The protein localises to the cell membrane. It carries out the reaction phosphate(out) + ATP + H2O = ADP + 2 phosphate(in) + H(+). Its function is as follows. Part of the ABC transporter complex PstSACB involved in phosphate import. Responsible for energy coupling to the transport system. This is Phosphate import ATP-binding protein PstB 2 from Streptococcus pneumoniae serotype 4 (strain ATCC BAA-334 / TIGR4).